The chain runs to 103 residues: Small ribosomal subunit protein uS10 (103 aa).

The protein belongs to the universal ribosomal protein uS10 family. As to quaternary structure, part of the 30S ribosomal subunit.

In terms of biological role, involved in the binding of tRNA to the ribosomes. The sequence is that of Small ribosomal subunit protein uS10 from Azoarcus sp. (strain BH72).